Reading from the N-terminus, the 120-residue chain is Flagellar protein FliT (120 aa).

The segment at 1–50 (MERHQHLLSEYQQILTLSEQMLVLATEGNWDALVDLEMTYLKAVESTANI) is required for homodimerization. The interval 60 to 98 (LQDLLREKLRAILDNEIEIKRLLQLRLDRLSDLVGQSTK) is fliD binding.

Belongs to the FliT family. As to quaternary structure, homodimer. Interacts with FliD and FlhC.

It localises to the cytoplasm. The protein resides in the cytosol. Its function is as follows. Dual-function protein that regulates the transcription of class 2 flagellar operons and that also acts as an export chaperone for the filament-capping protein FliD. As a transcriptional regulator, acts as an anti-FlhDC factor; it directly binds FlhC, thus inhibiting the binding of the FlhC/FlhD complex to class 2 promoters, resulting in decreased expression of class 2 flagellar operons. As a chaperone, effects FliD transition to the membrane by preventing its premature polymerization, and by directing it to the export apparatus. The polypeptide is Flagellar protein FliT (Yersinia enterocolitica serotype O:8 / biotype 1B (strain NCTC 13174 / 8081)).